The following is a 262-amino-acid chain: Phosphonates import ATP-binding protein PhnC (262 aa).

The region spanning 5–253 is the ABC transporter domain; that stretch reads IRVEKLAKTF…RFDHLYRSIN (249 aa). 37–44 provides a ligand contact to ATP; sequence GPSGSGKS.

This sequence belongs to the ABC transporter superfamily. Phosphonates importer (TC 3.A.1.9.1) family. The complex is composed of two ATP-binding proteins (PhnC), two transmembrane proteins (PhnE) and a solute-binding protein (PhnD).

The protein localises to the cell inner membrane. It catalyses the reaction phosphonate(out) + ATP + H2O = phosphonate(in) + ADP + phosphate + H(+). Part of the ABC transporter complex PhnCDE involved in phosphonates import. Responsible for energy coupling to the transport system. In Shigella sonnei (strain Ss046), this protein is Phosphonates import ATP-binding protein PhnC.